The chain runs to 220 residues: Carbonic anhydrase (220 aa).

Residues Cys-39, Asp-41, His-98, and Cys-101 each coordinate Zn(2+).

Belongs to the beta-class carbonic anhydrase family. Zn(2+) serves as cofactor.

The catalysed reaction is hydrogencarbonate + H(+) = CO2 + H2O. The sequence is that of Carbonic anhydrase (cynT) from Pseudomonas aeruginosa (strain ATCC 15692 / DSM 22644 / CIP 104116 / JCM 14847 / LMG 12228 / 1C / PRS 101 / PAO1).